Reading from the N-terminus, the 325-residue chain is MATH domain and coiled-coil domain-containing protein At3g58340 (325 aa).

The MATH domain maps to 6–131 (DKKFCWEIKN…NGQVMIVAEV (126 aa)). Residues 266–315 (KVDWLEKKLDHVKEKKEKEQSGLIILQGIEQQLHELMHKCEKKKSEVLSV) are a coiled coil.

This is MATH domain and coiled-coil domain-containing protein At3g58340 from Arabidopsis thaliana (Mouse-ear cress).